The chain runs to 278 residues: 1-acyl-sn-glycerol-3-phosphate acyltransferase beta (278 aa).

The first 23 residues, methionine 1–alanine 23, serve as a signal peptide directing secretion. Residues alanine 24–lysine 29 are Lumenal-facing. The chain crosses the membrane as a helical span at residues valine 30 to leucine 50. At arginine 51 to arginine 121 the chain is on the cytoplasmic side. The short motif at histidine 98–aspartate 103 is the HXXXXD motif element. Residues glutamate 122–asparagine 142 form a helical membrane-spanning segment. Residues arginine 143–glutamine 278 lie on the Lumenal side of the membrane. The EGTR motif signature appears at glutamate 172–arginine 175.

It belongs to the 1-acyl-sn-glycerol-3-phosphate acyltransferase family. In terms of tissue distribution, expressed predominantly in adipose tissue, pancreas and liver.

It localises to the endoplasmic reticulum membrane. It carries out the reaction a 1-acyl-sn-glycero-3-phosphate + an acyl-CoA = a 1,2-diacyl-sn-glycero-3-phosphate + CoA. It catalyses the reaction 1-(9Z-octadecenoyl)-sn-glycero-3-phosphate + (9Z)-octadecenoyl-CoA = 1,2-di-(9Z-octadecenoyl)-sn-glycero-3-phosphate + CoA. The catalysed reaction is 1-(9Z-octadecenoyl)-sn-glycero-3-phosphate + hexadecanoyl-CoA = 1-(9Z)-octadecenoyl-2-hexadecanoyl-sn-glycero-3-phosphate + CoA. The enzyme catalyses heptadecanoyl-CoA + 1-(9Z-octadecenoyl)-sn-glycero-3-phosphate = 1-(9Z)-octadecenoyl-2-heptadecanoyl-sn-glycero-3-phosphate + CoA. It carries out the reaction 1-(9Z-octadecenoyl)-sn-glycero-3-phosphate + (9Z,12Z)-octadecadienoyl-CoA = 1-(9Z)-octadecenoyl-2-(9Z,12Z)-octadecadienoyl-sn-glycero-3-phosphate + CoA. It catalyses the reaction 1-(9Z-octadecenoyl)-sn-glycero-3-phosphate + tetradecanoyl-CoA = 1-(9Z)-octadecenoyl-2-tetradecanoyl-sn-glycero-3-phosphate + CoA. The catalysed reaction is pentadecanoyl-CoA + 1-(9Z-octadecenoyl)-sn-glycero-3-phosphate = 1-(9Z)-octadecenoyl-2-pentadecanoyl-sn-glycero-3-phosphate + CoA. The enzyme catalyses 1-hexadecanoyl-sn-glycero-3-phosphate + (9Z)-octadecenoyl-CoA = 1-hexadecanoyl-2-(9Z-octadecenoyl)-sn-glycero-3-phosphate + CoA. It carries out the reaction 1-tetradecanoyl-sn-glycerol 3-phosphate + (9Z)-octadecenoyl-CoA = 1-tetradecanoyl-2-(9Z)-octadecenoyl-sn-glycero-3-phosphate + CoA. It catalyses the reaction 1-(9Z,12Z,15Z)-octadecatrienoyl-sn-glycero-3-phosphate + (9Z)-octadecenoyl-CoA = 1-(9Z,12Z,15Z)-octadecatrienoyl-2-(9Z)-octadecenoyl-sn-glycero-3-phosphate + CoA. The catalysed reaction is 1-(6Z,9Z,12Z-octadecatrienoyl)-sn-glycero-3-phosphate + (9Z)-octadecenoyl-CoA = (6Z,9Z,12Z)-octadecatrienoyl-2-(9Z)-octadecenoyl-sn-glycero-3-phosphate + CoA. The enzyme catalyses 1-eicosanoyl-sn-glycero-3-phosphate + (9Z)-octadecenoyl-CoA = 1-eicosanoyl-2-(9Z)-octadecenoyl-sn-glycero-3-phosphate + CoA. It carries out the reaction 1-hexadecanoyl-sn-glycero-3-phosphate + octadecanoyl-CoA = 1-hexadecanoyl-2-octadecanoyl-sn-glycero-3-phosphate + CoA. It catalyses the reaction 1-hexadecanoyl-sn-glycero-3-phosphate + (5Z,8Z,11Z,14Z)-eicosatetraenoyl-CoA = 1-hexadecanoyl-2-(5Z,8Z,11Z,14Z-eicosatetraenoyl)-sn-glycero-3-phosphate + CoA. The catalysed reaction is 1-hexadecanoyl-sn-glycero-3-phosphate + hexadecanoyl-CoA = 1,2-dihexadecanoyl-sn-glycero-3-phosphate + CoA. The enzyme catalyses 1-hexadecanoyl-sn-glycero-3-phosphate + tetradecanoyl-CoA = 1-hexadecanoyl-2-tetradecanoyl-sn-glycero-3-phosphate + CoA. It carries out the reaction (11Z)-octadecenoyl-CoA + 1-(9Z-octadecenoyl)-sn-glycero-3-phosphate = 1-(9Z)-octadecenoyl-2-(11Z)-octadecenoyl-sn-glycero-3-phosphate + CoA. It participates in phospholipid metabolism; CDP-diacylglycerol biosynthesis; CDP-diacylglycerol from sn-glycerol 3-phosphate: step 2/3. Converts 1-acyl-sn-glycerol-3-phosphate (lysophosphatidic acid or LPA) into 1,2-diacyl-sn-glycerol-3-phosphate (phosphatidic acid or PA) by incorporating an acyl moiety at the sn-2 position of the glycerol backbone. This is 1-acyl-sn-glycerol-3-phosphate acyltransferase beta (AGPAT2) from Homo sapiens (Human).